A 753-amino-acid polypeptide reads, in one-letter code: MAP/microtubule affinity-regulating kinase 3 (753 aa).

The tract at residues 1 to 36 is disordered; sequence MSTRTPLPTVNERDTENHTSHGDGRQEVTSRTSRSG. Positions 11-28 are enriched in basic and acidic residues; that stretch reads NERDTENHTSHGDGRQEV. Ser42 is subject to Phosphoserine. The 252-residue stretch at 56 to 307 folds into the Protein kinase domain; it reads YRLLKTIGKG…LEQIMKDRWI (252 aa). ATP-binding positions include 62–70 and Lys85; that span reads IGKGNFAKV. The Proton acceptor role is filled by Asp178. Thr211 carries the phosphothreonine; by LKB1 modification. Residues 326 to 365 enclose the UBA domain; the sequence is ISDQKRIDIMVGMGYSQEEIQESLSKMKYDEITATYLLLG. Residues Ser368, Ser374, Ser376, Ser380, Ser383, Leu384, Ser400, Arg407, Ser419, and Ser469 each carry the phosphoserine modification. The disordered stretch occupies residues 370-600; that stretch reads ELDASDSSSS…TPLSQTRSRG (231 aa). Residues 374 to 385 show a composition bias toward low complexity; it reads SDSSSSSNLSLA. Positions 391 to 400 are enriched in polar residues; it reads SDLNNSTGQS. 2 stretches are compositionally biased toward polar residues: residues 490–513 and 521–548; these read STVP…CSER and VIQN…SSAA. Residues Ser540 and Ser543 each carry the phosphoserine modification. At Thr549 the chain carries Phosphothreonine. Position 564 is a phosphothreonine; by PKC/PRKCZ (Thr564). Phosphoserine occurs at positions 583, 598, 601, and 643. The span at 584–600 shows a compositional bias: polar residues; that stretch reads PSLSHEATPLSQTRSRG. The segment at 632-655 is disordered; the sequence is NGRYEGSSRNVSAEQKDENKEAKP. A compositionally biased stretch (basic and acidic residues) spans 645 to 655; sequence EQKDENKEAKP. The KA1 domain maps to 704–753; that stretch reads DGHAENLVQWEMEVCKLPRLSLNGVRFKRISGTSIAFKNIASKIANELKL.

This sequence belongs to the protein kinase superfamily. CAMK Ser/Thr protein kinase family. SNF1 subfamily. Interacts with MAPT/TAU. Interacts with DLG5 (via coiled-coil domain). Interacts with STK3/MST2 and STK4/MST1 in the presence of DLG5. Interacts with YWHAB, YWHAG, YWHAQ and YWHAZ. Interacts with PKP2 (via N-terminus). Interacts with CDC25C. Interacts with KSR1. In terms of processing, phosphorylated at Thr-211 by STK11/LKB1 in complex with STE20-related adapter-alpha (STRADA) pseudo kinase and CAB39. Phosphorylation at Thr-564 by PRKCZ/aPKC inhibits the kinase activity. In terms of tissue distribution, ubiquitous.

It localises to the cell membrane. The protein localises to the cell projection. It is found in the dendrite. The protein resides in the cytoplasm. It catalyses the reaction L-seryl-[protein] + ATP = O-phospho-L-seryl-[protein] + ADP + H(+). The enzyme catalyses L-threonyl-[protein] + ATP = O-phospho-L-threonyl-[protein] + ADP + H(+). Activated by phosphorylation on Thr-211. Inhibited by phosphorylation on Thr-564. Serine/threonine-protein kinase. Involved in the specific phosphorylation of microtubule-associated proteins for MAP2 and MAP4. Phosphorylates the microtubule-associated protein MAPT/TAU. Phosphorylates CDC25C on 'Ser-216'. Regulates localization and activity of some histone deacetylases by mediating phosphorylation of HDAC7, promoting subsequent interaction between HDAC7 and 14-3-3 and export from the nucleus. Regulates localization and activity of MITF by mediating its phosphorylation, promoting subsequent interaction between MITF and 14-3-3 and retention in the cytosol. Negatively regulates the Hippo signaling pathway and antagonizes the phosphorylation of LATS1. Cooperates with DLG5 to inhibit the kinase activity of STK3/MST2 toward LATS1. Phosphorylates PKP2 and KSR1. The polypeptide is MAP/microtubule affinity-regulating kinase 3 (MARK3) (Homo sapiens (Human)).